We begin with the raw amino-acid sequence, 154 residues long: Ribosome maturation factor RimP (154 aa).

Belongs to the RimP family.

It is found in the cytoplasm. Functionally, required for maturation of 30S ribosomal subunits. This is Ribosome maturation factor RimP from Deinococcus deserti (strain DSM 17065 / CIP 109153 / LMG 22923 / VCD115).